A 388-amino-acid polypeptide reads, in one-letter code: Succinate--CoA ligase [ADP-forming] subunit beta (388 aa).

The ATP-grasp domain maps to 9-244 (KEILRKYGVT…LDEEDPAEIE (236 aa)). ATP-binding positions include K46, 53–55 (GRG), E99, A102, and E107. Mg(2+) is bound by residues N199 and D213. Residues N264 and 321–323 (GIM) contribute to the substrate site.

The protein belongs to the succinate/malate CoA ligase beta subunit family. Heterotetramer of two alpha and two beta subunits. It depends on Mg(2+) as a cofactor.

It catalyses the reaction succinate + ATP + CoA = succinyl-CoA + ADP + phosphate. The enzyme catalyses GTP + succinate + CoA = succinyl-CoA + GDP + phosphate. It functions in the pathway carbohydrate metabolism; tricarboxylic acid cycle; succinate from succinyl-CoA (ligase route): step 1/1. Succinyl-CoA synthetase functions in the citric acid cycle (TCA), coupling the hydrolysis of succinyl-CoA to the synthesis of either ATP or GTP and thus represents the only step of substrate-level phosphorylation in the TCA. The beta subunit provides nucleotide specificity of the enzyme and binds the substrate succinate, while the binding sites for coenzyme A and phosphate are found in the alpha subunit. This Herminiimonas arsenicoxydans protein is Succinate--CoA ligase [ADP-forming] subunit beta.